A 522-amino-acid chain; its full sequence is N-acetylgalactosamine-6-sulfatase (522 aa).

A signal peptide spans 1–26 (MAAVVAATRWWQLLLVLSAAGMGASG). The interval 27 to 379 (APQPPNILLL…PTLLQGRLMD (353 aa)) is catalytic domain. Residues aspartate 39, aspartate 40, and cysteine 79 each contribute to the Ca(2+) site. Cysteine 79 serves as the catalytic Nucleophile. Cysteine 79 bears the 3-oxoalanine (Cys) mark. The active site involves histidine 142. An N-linked (GlcNAc...) asparagine glycan is attached at asparagine 204. Ca(2+)-binding residues include aspartate 288 and asparagine 289. Cysteine 308 and cysteine 419 form a disulfide bridge. A glycan (N-linked (GlcNAc...) asparagine) is linked at asparagine 423. Cystine bridges form between cysteine 489-cysteine 518 and cysteine 501-cysteine 507.

The protein belongs to the sulfatase family. As to quaternary structure, homodimer. Requires Ca(2+) as cofactor. Post-translationally, the conversion to 3-oxoalanine (also known as C-formylglycine, FGly), of a serine or cysteine residue in prokaryotes and of a cysteine residue in eukaryotes, is critical for catalytic activity.

It is found in the lysosome. It catalyses the reaction Hydrolysis of the 6-sulfate groups of the N-acetyl-D-galactosamine 6-sulfate units of chondroitin sulfate and of the D-galactose 6-sulfate units of keratan sulfate.. In Homo sapiens (Human), this protein is N-acetylgalactosamine-6-sulfatase (GALNS).